Consider the following 394-residue polypeptide: Growth-regulating factor 4 (394 aa).

Positions 64 to 99 constitute a QLQ domain; the sequence is PFTAAQYEELEQQALIYKYLVAGVPVPPDLVLPIRR. A WRC domain is found at 125–169; that stretch reads DPEPGRCRRTDGKKWRCSKEAAPDSKYCERHMHRGRNRSRKPVET. 2 consecutive short sequence motifs (bipartite nuclear localization signal) follow at residues 130–140 and 158–165; these read RCRRTDGKKWR and RGRNRSRK. Residues 156–180 form a disordered region; the sequence is MHRGRNRSRKPVETQLVAQSQPPSS. Over residues 170–180 the composition is skewed to low complexity; that stretch reads QLVAQSQPPSS.

It belongs to the GRF family. As to quaternary structure, interacts with GIF1. Interacts with GSK2. Expressed in stems. Expressed in panicles.

It is found in the nucleus. With respect to regulation, transactivation activity is repressed by GSK2. Functionally, transcription activator that plays a role in the regulation of meristematic function in leaves, stems and inflorescences. Transcription activator that plays a regulatory role in grain development. Positively regulates grain size by promoting cell division and expansion, leading to increased grain length and width. Positively regulates the expression of genes promoting cell proliferation. Activates the expression of expansin genes to promote cell expansion and grain size. May promote grain size by activating brassinosteroid responses. Component of a network formed by the microRNA396 (miRNA396), the GRFs and their interacting factors (GIFs) acting in the regulation of meristem function, at least partially through the control of cell proliferation. Component of the miRNA396c-GRF4-GIF1 regulatory module that plays an important role in grain size determination. The chain is Growth-regulating factor 4 from Oryza sativa subsp. japonica (Rice).